We begin with the raw amino-acid sequence, 172 residues long: Translationally-controlled tumor protein homolog (172 aa).

Residues 1–172 (MIIYKDTVTE…FKDGLISEKC (172 aa)) form the TCTP domain.

The protein belongs to the TCTP family.

The protein resides in the cytoplasm. Involved in calcium binding and microtubule stabilization. The sequence is that of Translationally-controlled tumor protein homolog (tpt1) from Xenopus tropicalis (Western clawed frog).